The following is a 2195-amino-acid chain: COPII coat assembly protein SEC16 (2195 aa).

Basic residues predominate over residues 1–20; that stretch reads MTPEAKKRKNQKKKLKQKQK. The interval 1 to 112 is disordered; the sequence is MTPEAKKRKN…ADSNDLPDNS (112 aa). Composition is skewed to basic and acidic residues over residues 21–32 and 49–59; these read KAAEKAASHSEE and SVNRTESDIAS. Ser28 is subject to Phosphoserine. Positions 66–79 are enriched in polar residues; the sequence is VSSSTNISPANETQ. Ser73 bears the Phosphoserine mark. A compositionally biased stretch (basic and acidic residues) spans 86–102; it reads QELHHKLLNDSDQHDIT. Position 144 is a phosphoserine (Ser144). Disordered stretches follow at residues 201–233, 247–381, 436–555, 594–616, and 643–708; these read PSDGNLLSPELSSGDTPTHNVPLGTKDNEINDD, NVLP…FHGH, TQSS…KASR, GTPNQQVSVPNIVSPKPPVVKDN, and SKKG…QSPV. Over residues 210 to 219 the composition is skewed to polar residues; sequence ELSSGDTPTH. Basic and acidic residues predominate over residues 257–276; that stretch reads EDERLKLETHVSTEEKKQDI. Residues 282-292 show a composition bias toward polar residues; sequence AENLFTSSTEP. Position 313 is a phosphoserine (Ser313). Residues 314 to 329 show a composition bias toward basic and acidic residues; that stretch reads DQKVPWEEDVKKDFHN. Over residues 330 to 341 the composition is skewed to polar residues; it reads ENTNNTQESAPN. Composition is skewed to basic and acidic residues over residues 342–381 and 450–479; these read TDDRDKGYEGNEALKKSESCTAADERSYSEETSEDIFHGH and STDKNADVTSKSQEKHEDLFAASGNDEKLP. Phosphoserine occurs at positions 472 and 483. Positions 489-501 are enriched in polar residues; it reads SGKTENSMQTSTE. Acidic residues predominate over residues 512 to 533; sequence ENDDDLLDDDDSFLASSEEEDT. Composition is skewed to polar residues over residues 534–545 and 594–604; these read VPNTDNTTNLTS and GTPNQQVSVPN. Thr595 bears the Phosphothreonine mark. 22 positions are modified to phosphoserine: Ser607, Ser660, Ser663, Ser665, Ser674, Ser678, Ser681, Ser701, Ser704, Ser706, Ser759, Ser762, Ser765, Ser768, Ser843, Ser1511, Ser1515, Ser1578, Ser1602, Ser1603, Ser1611, and Ser1617. A compositionally biased stretch (polar residues) spans 657 to 666; it reads RFGSGNSFSS. Positions 693-708 are enriched in polar residues; sequence EPRSSRTNSAISQSPV. 2 disordered regions span residues 1656 to 1731 and 1751 to 1804; these read VHET…TVNP and GTDA…QDEN. Residues 1673–1682 show a composition bias toward basic and acidic residues; that stretch reads MPEDESHTSH. 2 stretches are compositionally biased toward polar residues: residues 1683–1693 and 1775–1786; these read DNSNADQNTLK and ENISKSASSAYL. A phosphoserine mark is found at Ser1778 and Ser1875. Residues 1917–1936 form a disordered region; sequence SFELSESTSQAQSNGNVASE. 3 positions are modified to phosphoserine: Ser1973, Ser1986, and Ser1992. The interval 1976–2031 is disordered; sequence DKYNDVIEDESDDDNMSTDEAKNRKEEKKNVNMKKETKPSNKDIDDKSNGWFGWLK. The segment covering 1981–1992 has biased composition (acidic residues); the sequence is VIEDESDDDNMS. A compositionally biased stretch (basic and acidic residues) spans 1994–2023; that stretch reads DEAKNRKEEKKNVNMKKETKPSNKDIDDKS. Thr2049 is modified (phosphothreonine). A compositionally biased stretch (basic and acidic residues) spans 2054–2072; it reads EKLKRWVNKDATEEEKQKI. The disordered stretch occupies residues 2054 to 2195; the sequence is EKLKRWVNKD…GYVNVMDNIQ (142 aa). Ser2130 is subject to Phosphoserine. The span at 2131-2143 shows a compositional bias: pro residues; sequence PTGPNPNNSPSPS.

Belongs to the SEC16 family. As to quaternary structure, interacts with SEC23, SEC31 and SED4.

The protein localises to the endoplasmic reticulum membrane. Functionally, involved in the initiation of assembly of the COPII coat required for the formation of transport vesicles from the endoplasmic reticulum (ER) and the selection of cargo molecules. Also involved in autophagy. The polypeptide is COPII coat assembly protein SEC16 (SEC16) (Saccharomyces cerevisiae (strain ATCC 204508 / S288c) (Baker's yeast)).